The chain runs to 201 residues: LexA repressor (201 aa).

A DNA-binding region (H-T-H motif) is located at residues 28-48 (RAEIAARLGFRSPNAAEEHLK). Active-site for autocatalytic cleavage activity residues include S118 and K155.

This sequence belongs to the peptidase S24 family. As to quaternary structure, homodimer.

The enzyme catalyses Hydrolysis of Ala-|-Gly bond in repressor LexA.. In terms of biological role, represses a number of genes involved in the response to DNA damage (SOS response), including recA and lexA. In the presence of single-stranded DNA, RecA interacts with LexA causing an autocatalytic cleavage which disrupts the DNA-binding part of LexA, leading to derepression of the SOS regulon and eventually DNA repair. The polypeptide is LexA repressor (Photorhabdus laumondii subsp. laumondii (strain DSM 15139 / CIP 105565 / TT01) (Photorhabdus luminescens subsp. laumondii)).